The following is a 366-amino-acid chain: Patr class I histocompatibility antigen, C alpha chain (366 aa).

Residues M1–A24 form the signal peptide. The interval G25–D114 is alpha-1. The Extracellular portion of the chain corresponds to G25–I308. N-linked (GlcNAc...) asparagine glycosylation occurs at N110. Residues G115–T206 form an alpha-2 region. Disulfide bonds link C125–C192 and C227–C283. The alpha-3 stretch occupies residues E207–W298. Residues P209–R297 enclose the Ig-like C1-type domain. Positions K299–I308 are connecting peptide. Residues V309–M332 traverse the membrane as a helical segment. Topologically, residues C333–A366 are cytoplasmic. Residues S357 and S360 each carry the phosphoserine modification.

It belongs to the MHC class I family. Heterodimer of an alpha chain and a beta chain (beta-2-microglobulin).

It is found in the membrane. In terms of biological role, involved in the presentation of foreign antigens to the immune system. The polypeptide is Patr class I histocompatibility antigen, C alpha chain (Pan troglodytes (Chimpanzee)).